The sequence spans 315 residues: Ribosomal protein L11 methyltransferase (315 aa).

S-adenosyl-L-methionine contacts are provided by threonine 163, glycine 185, aspartate 207, and asparagine 249.

Belongs to the methyltransferase superfamily. PrmA family.

It localises to the cytoplasm. The enzyme catalyses L-lysyl-[protein] + 3 S-adenosyl-L-methionine = N(6),N(6),N(6)-trimethyl-L-lysyl-[protein] + 3 S-adenosyl-L-homocysteine + 3 H(+). Its function is as follows. Methylates ribosomal protein L11. The polypeptide is Ribosomal protein L11 methyltransferase (Lactobacillus helveticus (strain DPC 4571)).